The following is a 179-amino-acid chain: ATP-dependent protease subunit HslV (179 aa).

T9 is an active-site residue. Na(+) is bound by residues A164, C167, and T170.

This sequence belongs to the peptidase T1B family. HslV subfamily. A double ring-shaped homohexamer of HslV is capped on each side by a ring-shaped HslU homohexamer. The assembly of the HslU/HslV complex is dependent on binding of ATP.

Its subcellular location is the cytoplasm. It carries out the reaction ATP-dependent cleavage of peptide bonds with broad specificity.. Its activity is regulated as follows. Allosterically activated by HslU binding. Functionally, protease subunit of a proteasome-like degradation complex believed to be a general protein degrading machinery. The sequence is that of ATP-dependent protease subunit HslV from Syntrophobacter fumaroxidans (strain DSM 10017 / MPOB).